The chain runs to 151 residues: MISVLGLDLGRKRIGVAGCDRLGQLATGITTIYRRNFASDVAQLRRICQERGVEKLIVGLPYTLDGQLGSQARQVQHLAEKIGAALNLPVEYIDERLTSFQAEEILKQRRRSPRHHKDLVDQIAAALILQQWLDARSQTAKATLAAGDPQL.

Belongs to the YqgF nuclease family.

It localises to the cytoplasm. Functionally, could be a nuclease involved in processing of the 5'-end of pre-16S rRNA. The protein is Putative pre-16S rRNA nuclease of Thermosynechococcus vestitus (strain NIES-2133 / IAM M-273 / BP-1).